Here is a 616-residue protein sequence, read N- to C-terminus: uncharacterized protein (616 aa).

This is an uncharacterized protein from Methanocaldococcus jannaschii (strain ATCC 43067 / DSM 2661 / JAL-1 / JCM 10045 / NBRC 100440) (Methanococcus jannaschii).